Reading from the N-terminus, the 310-residue chain is Methionyl-tRNA formyltransferase (310 aa).

A (6S)-5,6,7,8-tetrahydrofolate-binding site is contributed by 110–113; sequence SLLP.

This sequence belongs to the Fmt family.

The enzyme catalyses L-methionyl-tRNA(fMet) + (6R)-10-formyltetrahydrofolate = N-formyl-L-methionyl-tRNA(fMet) + (6S)-5,6,7,8-tetrahydrofolate + H(+). Functionally, attaches a formyl group to the free amino group of methionyl-tRNA(fMet). The formyl group appears to play a dual role in the initiator identity of N-formylmethionyl-tRNA by promoting its recognition by IF2 and preventing the misappropriation of this tRNA by the elongation apparatus. The chain is Methionyl-tRNA formyltransferase from Clostridium acetobutylicum (strain ATCC 824 / DSM 792 / JCM 1419 / IAM 19013 / LMG 5710 / NBRC 13948 / NRRL B-527 / VKM B-1787 / 2291 / W).